The chain runs to 156 residues: S-ribosylhomocysteine lyase (156 aa).

Positions 56, 60, and 123 each coordinate Fe cation.

This sequence belongs to the LuxS family. In terms of assembly, homodimer. Fe cation is required as a cofactor.

It catalyses the reaction S-(5-deoxy-D-ribos-5-yl)-L-homocysteine = (S)-4,5-dihydroxypentane-2,3-dione + L-homocysteine. In terms of biological role, involved in the synthesis of autoinducer 2 (AI-2) which is secreted by bacteria and is used to communicate both the cell density and the metabolic potential of the environment. The regulation of gene expression in response to changes in cell density is called quorum sensing. Catalyzes the transformation of S-ribosylhomocysteine (RHC) to homocysteine (HC) and 4,5-dihydroxy-2,3-pentadione (DPD). The protein is S-ribosylhomocysteine lyase of Staphylococcus haemolyticus (strain JCSC1435).